The primary structure comprises 100 residues: Small ribosomal subunit protein uS14c (100 aa).

It belongs to the universal ribosomal protein uS14 family. Part of the 30S ribosomal subunit.

It is found in the plastid. The protein localises to the chloroplast. In terms of biological role, binds 16S rRNA, required for the assembly of 30S particles. In Rhodomonas salina (Cryptomonas salina), this protein is Small ribosomal subunit protein uS14c.